Here is a 345-residue protein sequence, read N- to C-terminus: GTPase Obg (345 aa).

The Obg domain maps to 1–159; the sequence is MRFIDEASIT…FHLKLELKLL (159 aa). The OBG-type G domain occupies 160–329; that stretch reads ADVGIVGLPN…LIQILARQIA (170 aa). Residues 166-173, 191-195, 213-216, 283-286, and 310-312 contribute to the GTP site; these read GLPNAGKS, FTTLT, DIPG, NKID, and SAA. 2 residues coordinate Mg(2+): S173 and T193.

This sequence belongs to the TRAFAC class OBG-HflX-like GTPase superfamily. OBG GTPase family. In terms of assembly, monomer. Mg(2+) is required as a cofactor.

The protein localises to the cytoplasm. In terms of biological role, an essential GTPase which binds GTP, GDP and possibly (p)ppGpp with moderate affinity, with high nucleotide exchange rates and a fairly low GTP hydrolysis rate. Plays a role in control of the cell cycle, stress response, ribosome biogenesis and in those bacteria that undergo differentiation, in morphogenesis control. The protein is GTPase Obg of Desulforapulum autotrophicum (strain ATCC 43914 / DSM 3382 / VKM B-1955 / HRM2) (Desulfobacterium autotrophicum).